Consider the following 375-residue polypeptide: Anhydro-N-acetylmuramic acid kinase (375 aa).

12-19 (GTSMDGVD) lines the ATP pocket.

Belongs to the anhydro-N-acetylmuramic acid kinase family.

It catalyses the reaction 1,6-anhydro-N-acetyl-beta-muramate + ATP + H2O = N-acetyl-D-muramate 6-phosphate + ADP + H(+). The protein operates within amino-sugar metabolism; 1,6-anhydro-N-acetylmuramate degradation. It functions in the pathway cell wall biogenesis; peptidoglycan recycling. Functionally, catalyzes the specific phosphorylation of 1,6-anhydro-N-acetylmuramic acid (anhMurNAc) with the simultaneous cleavage of the 1,6-anhydro ring, generating MurNAc-6-P. Is required for the utilization of anhMurNAc either imported from the medium or derived from its own cell wall murein, and thus plays a role in cell wall recycling. The sequence is that of Anhydro-N-acetylmuramic acid kinase from Photobacterium profundum (strain SS9).